The sequence spans 208 residues: Small ribosomal subunit protein uS4 (208 aa).

The S4 RNA-binding domain occupies S97 to L160.

The protein belongs to the universal ribosomal protein uS4 family. As to quaternary structure, part of the 30S ribosomal subunit. Contacts protein S5. The interaction surface between S4 and S5 is involved in control of translational fidelity.

Functionally, one of the primary rRNA binding proteins, it binds directly to 16S rRNA where it nucleates assembly of the body of the 30S subunit. Its function is as follows. With S5 and S12 plays an important role in translational accuracy. This is Small ribosomal subunit protein uS4 from Mesoplasma florum (strain ATCC 33453 / NBRC 100688 / NCTC 11704 / L1) (Acholeplasma florum).